A 930-amino-acid chain; its full sequence is Endoplasmic reticulum aminopeptidase 1 (930 aa).

At 1–2 (MP) the chain is on the cytoplasmic side. A helical; Signal-anchor for type II membrane protein membrane pass occupies residues 3–23 (SLLSLVLTFLAVSSPSCCQNS). Residues 24–930 (DTASPKASNG…WLQKERQELL (907 aa)) are Lumenal-facing. N-linked (GlcNAc...) asparagine glycosylation is found at N59 and N143. Residues E172 and 306 to 310 (GAMEN) each bind substrate. H342 contacts Zn(2+). The active-site Proton acceptor is E343. Zn(2+)-binding residues include H346 and E365. C393 and C432 are oxidised to a cystine. Residues N403 and N655 are each glycosylated (N-linked (GlcNAc...) asparagine). A disulfide bridge links C725 with C732. Residues N749 and N890 are each glycosylated (N-linked (GlcNAc...) asparagine).

Belongs to the peptidase M1 family. Monomer. May also exist as a heterodimer; with ERAP2. Interacts with RBMX. Zn(2+) is required as a cofactor. In terms of processing, N-glycosylated. In terms of tissue distribution, ubiquitous.

Its subcellular location is the endoplasmic reticulum membrane. Functionally, aminopeptidase that plays a central role in peptide trimming, a step required for the generation of most HLA class I-binding peptides. Peptide trimming is essential to customize longer precursor peptides to fit them to the correct length required for presentation on MHC class I molecules. Strongly prefers substrates 9-16 residues long. Rapidly degrades 13-mer to a 9-mer and then stops. Preferentially hydrolyzes the residue Leu and peptides with a hydrophobic C-terminus, while it has weak activity toward peptides with charged C-terminus. May play a role in the inactivation of peptide hormones. May be involved in the regulation of blood pressure through the inactivation of angiotensin II and/or the generation of bradykinin in the kidney. This is Endoplasmic reticulum aminopeptidase 1 (Erap1) from Rattus norvegicus (Rat).